The sequence spans 1175 residues: MLEGCILADFRQSKTDRPQSSSNGSSSLNGSVPGAPNRVSFAKLREPLEVPGLLDVQIDSFEWLIGAPRWREAAIARGDAEPKGGLEEVLDELSPIEDFSGSMSLSFSDPRFDEVKAPVDECKDKDMTYAAPLFVTAEFINNNTGEIKSQTVFMGDFPMMTEKGTFIINGTERVVVSQLVRSPGVYFDETIDKSTEKTLHSVKVIPSRGAWLEFDVDKRDTVGVRIDRKRRQPVTVLLKALGWTNEQITERFGFSEIMMSTLEKDNTAGTDEALLDIYRKLRPGEPPTKESAQTLLENLFFKEKRYDLARVGRYKVNKKLGLHAGEPITSSTLTEEDVVATIEYLVRLHEGQPTMTVPGGIEVPVETDDIDHFGNRRLRTVGELIQNQIRVGMSRMERVVRERMTTQDVEAITPQTLINIRPVVAAIKEFFGTSQLSQFMDQNNPLSGLTHKRRLSALGPGGLSRERAGLEVRDVHPSHYGRMCPIETPEGPNIGLIGSLSVYARVNPFGFIETPYRKVVDGVVTDEIHYLTADEEDRHVVAQANSPIDDKGRFAEARVLVRRKAGEVEYVPSSEVDYMDVSPRQMVSVATAMIPFLEHDDANRALMGANMQRQAVPLVRSEAPLVGTGMELRAAIDAGDVVVAEKSGVIEEVSADYITVMADDGTRHTYRMRKFERSNHGTCANQSPIVDAGDRVEAGQVIADGPCTENGEMALGKNLLVAIMPWEGHNYEDAIILSNRLVEEDVLTSIHIEEHEIDARDTKLGAEEITRDIPNVSDEVLADLDERGIVRIGAEVRDGDILVGKVTPKGETELTPEERLLRAIFGEKAREVRDTSLKVPHGESGKVIGIRVFSREDDDELPAGVNELVRVYVAQKRKISDGDKLAGRHGNKGVIGKILPQEDMPFLPDGTPVDIILNTHGVPRRMNIGQILETHLGWVAKSGWNIDGNPEWAVNLPEELRHAQPNQIVSTPVFDGAKEEELAGMLSCTLPNRDGEVMVDGDGKAVLFDGRSGEPFPYPVTVGYMYIMKLHHLVDDKIHARSTGPYSMITQQPLGGKAQFGGQRFGEMECWAMQAYGAAYTLQELLTIKSDDTVGRVKVYEAIVKGENIPEPGIPESFKVLLKELQSLCLNVEVLSSDGAAIELREGEDEDLERAAANLGINLSRNESASVEDLA.

The tract at residues 12-33 (QSKTDRPQSSSNGSSSLNGSVP) is disordered. Low complexity predominate over residues 20-31 (SSSNGSSSLNGS).

This sequence belongs to the RNA polymerase beta chain family. As to quaternary structure, the RNAP catalytic core consists of 2 alpha, 1 beta, 1 beta' and 1 omega subunit. When a sigma factor is associated with the core the holoenzyme is formed, which can initiate transcription.

The enzyme catalyses RNA(n) + a ribonucleoside 5'-triphosphate = RNA(n+1) + diphosphate. Its function is as follows. DNA-dependent RNA polymerase catalyzes the transcription of DNA into RNA using the four ribonucleoside triphosphates as substrates. The sequence is that of DNA-directed RNA polymerase subunit beta from Mycobacterium avium (strain 104).